We begin with the raw amino-acid sequence, 330 residues long: Ketol-acid reductoisomerase (NADP(+)) (330 aa).

Residues 2 to 182 enclose the KARI N-terminal Rossmann domain; the sequence is ARMYYDEDAN…GGTRAGVLET (181 aa). NADP(+) is bound by residues 25–28, serine 51, serine 53, and 83–86; these read YGSQ and DEVQ. Histidine 108 is an active-site residue. Residue glycine 134 participates in NADP(+) binding. Residues 183-328 form the KARI C-terminal knotted domain; sequence TFREETETDL…QDLRAMMSWL (146 aa). Aspartate 191, glutamate 195, glutamate 227, and glutamate 231 together coordinate Mg(2+). A substrate-binding site is contributed by serine 252.

This sequence belongs to the ketol-acid reductoisomerase family. The cofactor is Mg(2+).

It catalyses the reaction (2R)-2,3-dihydroxy-3-methylbutanoate + NADP(+) = (2S)-2-acetolactate + NADPH + H(+). It carries out the reaction (2R,3R)-2,3-dihydroxy-3-methylpentanoate + NADP(+) = (S)-2-ethyl-2-hydroxy-3-oxobutanoate + NADPH + H(+). Its pathway is amino-acid biosynthesis; L-isoleucine biosynthesis; L-isoleucine from 2-oxobutanoate: step 2/4. It participates in amino-acid biosynthesis; L-valine biosynthesis; L-valine from pyruvate: step 2/4. Its function is as follows. Involved in the biosynthesis of branched-chain amino acids (BCAA). Catalyzes an alkyl-migration followed by a ketol-acid reduction of (S)-2-acetolactate (S2AL) to yield (R)-2,3-dihydroxy-isovalerate. In the isomerase reaction, S2AL is rearranged via a Mg-dependent methyl migration to produce 3-hydroxy-3-methyl-2-ketobutyrate (HMKB). In the reductase reaction, this 2-ketoacid undergoes a metal-dependent reduction by NADPH to yield (R)-2,3-dihydroxy-isovalerate. This chain is Ketol-acid reductoisomerase (NADP(+)), found in Microcystis aeruginosa (strain NIES-843 / IAM M-2473).